Reading from the N-terminus, the 120-residue chain is MTMTMSYKAIEKIPRCSWNREEPGEQWNKIYSVETGLLGTYSFEWQSQVANKTMRKRNTNSICGRQHEPHCPVSITRAIAQPQLLTFPDSLASRGGHMTQSGQCHVSGSLLGRGHKSRGR.

Residues S90–R120 are disordered.

This is an uncharacterized protein from Homo sapiens (Human).